Consider the following 249-residue polypeptide: MPNDVTPGHPAGDDAKYARVMLKISGEALMGDQGFGLHPPTVERIAREIQSVHDMGVEICLVIGGGNIFRGLQGSAQGMERTTADYMGMLATVMNALAMQGALESLGVYTRVISAITMNEVAEPYIRRRAIRHLEKKRVCIFAAGTGNPYFTTDTAATLRASEMDCEAIFKGTKVDGVYDKDPAKHADAKRYETVTYDEVLAQHLGVMDASAIALARENKLPIMVFSLDEPGGFRSILDGTGTYTKVVE.

ATP is bound at residue lysine 23–glycine 26. The interval glycine 31–glycine 36 is involved in allosteric activation by GTP. Glycine 65 contacts UMP. Residues glycine 66 and arginine 70 each contribute to the ATP site. Residues aspartate 85 and threonine 146 to threonine 153 contribute to the UMP site. Positions 173, 179, and 182 each coordinate ATP.

This sequence belongs to the UMP kinase family. As to quaternary structure, homohexamer.

The protein localises to the cytoplasm. It carries out the reaction UMP + ATP = UDP + ADP. It participates in pyrimidine metabolism; CTP biosynthesis via de novo pathway; UDP from UMP (UMPK route): step 1/1. Allosterically activated by GTP. Inhibited by UTP. Functionally, catalyzes the reversible phosphorylation of UMP to UDP. The sequence is that of Uridylate kinase from Jannaschia sp. (strain CCS1).